The primary structure comprises 332 residues: Ketol-acid reductoisomerase (NADP(+)) (332 aa).

The 181-residue stretch at 2 to 182 (ANIYYDEDAS…GATRAGLIET (181 aa)) folds into the KARI N-terminal Rossmann domain. NADP(+) contacts are provided by residues 25-28 (YGSQ), S51, S53, and 83-86 (DTVQ). H108 is a catalytic residue. Residue G134 coordinates NADP(+). In terms of domain architecture, KARI C-terminal knotted spans 183–327 (TFKEETETDL…KELRKMMPWL (145 aa)). Residues D191, E195, E227, and E231 each contribute to the Mg(2+) site. S252 lines the substrate pocket.

The protein belongs to the ketol-acid reductoisomerase family. It depends on Mg(2+) as a cofactor.

The catalysed reaction is (2R)-2,3-dihydroxy-3-methylbutanoate + NADP(+) = (2S)-2-acetolactate + NADPH + H(+). It carries out the reaction (2R,3R)-2,3-dihydroxy-3-methylpentanoate + NADP(+) = (S)-2-ethyl-2-hydroxy-3-oxobutanoate + NADPH + H(+). It participates in amino-acid biosynthesis; L-isoleucine biosynthesis; L-isoleucine from 2-oxobutanoate: step 2/4. It functions in the pathway amino-acid biosynthesis; L-valine biosynthesis; L-valine from pyruvate: step 2/4. Functionally, involved in the biosynthesis of branched-chain amino acids (BCAA). Catalyzes an alkyl-migration followed by a ketol-acid reduction of (S)-2-acetolactate (S2AL) to yield (R)-2,3-dihydroxy-isovalerate. In the isomerase reaction, S2AL is rearranged via a Mg-dependent methyl migration to produce 3-hydroxy-3-methyl-2-ketobutyrate (HMKB). In the reductase reaction, this 2-ketoacid undergoes a metal-dependent reduction by NADPH to yield (R)-2,3-dihydroxy-isovalerate. In Sulfurihydrogenibium sp. (strain YO3AOP1), this protein is Ketol-acid reductoisomerase (NADP(+)).